A 727-amino-acid polypeptide reads, in one-letter code: Cyclin-T1 (727 aa).

Ser-117 is modified (phosphoserine). The short motif at 253-270 is the Nuclear localization signal, and interaction with Tat-TAR RNA element; that stretch reads KRIRNWRACQAAKKTKAD. Residues 302-322 are compositionally biased toward low complexity; it reads MSTSSTTSTVPSLPTTEESSS. The disordered stretch occupies residues 302 to 326; the sequence is MSTSSTTSTVPSLPTTEESSSNLSG. A Glycyl lysine isopeptide (Lys-Gly) (interchain with G-Cter in SUMO2) cross-link involves residue Lys-343. Residues 386–427 adopt a coiled-coil conformation; that stretch reads SAKVSLKEYRAKHAEELAAQKRQLENMEANVKSQYAYAAQNL. Ser-390 is subject to Phosphoserine. Position 392 is an N6-acetyllysine (Lys-392). A Glycyl lysine isopeptide (Lys-Gly) (interchain with G-Cter in SUMO2) cross-link involves residue Lys-417. 3 positions are modified to ADP-ribosylserine: Ser-418, Ser-476, and Ser-477. Residues 482–552 form a histidine-rich domain (HRD) region; the sequence is IKMRIKVHAA…RPGDPKHSSQ (71 aa). Residue Lys-483 forms a Glycyl lysine isopeptide (Lys-Gly) (interchain with G-Cter in SUMO2) linkage. Positions 486 to 508 are enriched in basic and acidic residues; it reads IKVHAAPDKHNSIDDSVTKSREH. 2 disordered regions span residues 486–591 and 692–727; these read IKVH…DHPA and LNPR…PLPK. Lys-487 carries the N6-(ADP-ribosyl)lysine modification. His-489 is subject to ADP-ribosylhistidine. Residues Ser-497 and Ser-501 each carry the phosphoserine modification. The span at 509-532 shows a compositional bias: basic residues; sequence KEKHKTHPSNHHHHHNHHSHKHSH. Residue His-532 is modified to ADP-ribosylhistidine. Residues Ser-533, Ser-551, and Ser-554 each carry the ADP-ribosylserine modification. Residue His-558 is modified to ADP-ribosylhistidine. Residues 562 to 572 show a composition bias toward low complexity; that stretch reads SLSSSFSSSSS. Ser-565 carries the post-translational modification ADP-ribosylserine. Position 566 is a phosphoserine (Ser-566). A compositionally biased stretch (pro residues) spans 711 to 727; the sequence is LPPLPSEPPPPLPPLPK.

This sequence belongs to the cyclin family. Cyclin C subfamily. As to quaternary structure, cyclin-T1 is the predominant cyclin that associates with CDK9 to form a heterodimer called P-TEFb. P-TEFb forms a complex with AFF4/AF5Q31. Component of a complex which is at least composed of HTATSF1/Tat-SF1, P-TEFb complex, RNA pol II, SUPT5H, and NCL/nucleolin. Component of the 7SK snRNP complex at least composed of P-TEFb (composed of CDK9 and CCNT1/cyclin-T1), HEXIM1, HEXIM2, BCDIN3, SART3 proteins and 7SK and U6 snRNAs. Interacts (via central region) with ZMYND8 (via N-terminus); the interaction is direct and the association appears to occur between homodimeric ZMYND8 and the activated form of the P-TEFb complex. Interacts with BRD4, targets chromatin binding. Interacts with JMJD6. Interacts with MDFIC. Interacts with HSF1. Interacts with HTATSF1. Interacts with TBX21. In terms of processing, ADP-ribosylation on serine residues by PARP1 in response to DNA damage disrupts the phase separation activity of CCNT1, thereby preventing activation of CDK9.

The protein localises to the nucleus. Its function is as follows. Regulatory subunit of the cyclin-dependent kinase pair (CDK9/cyclin-T1) complex, also called positive transcription elongation factor B (P-TEFb), which facilitates the transition from abortive to productive elongation by phosphorylating the CTD (C-terminal domain) of the large subunit of RNA polymerase II (RNA Pol II). Required to activate the protein kinase activity of CDK9: acts by mediating formation of liquid-liquid phase separation (LLPS) that enhances binding of P-TEFb to the CTD of RNA Pol II. This is Cyclin-T1 (CCNT1) from Equus caballus (Horse).